The following is a 140-amino-acid chain: ATP synthase epsilon chain, chloroplastic (140 aa).

This sequence belongs to the ATPase epsilon chain family. F-type ATPases have 2 components, CF(1) - the catalytic core - and CF(0) - the membrane proton channel. CF(1) has five subunits: alpha(3), beta(3), gamma(1), delta(1), epsilon(1). CF(0) has three main subunits: a, b and c.

The protein localises to the plastid. It is found in the chloroplast thylakoid membrane. Produces ATP from ADP in the presence of a proton gradient across the membrane. This is ATP synthase epsilon chain, chloroplastic from Panax ginseng (Korean ginseng).